Consider the following 350-residue polypeptide: Putative D-xylulose reductase (350 aa).

Residues cysteine 43, histidine 68, and glutamate 154 each contribute to the Zn(2+) site.

Belongs to the zinc-containing alcohol dehydrogenase family. It depends on Zn(2+) as a cofactor.

It catalyses the reaction xylitol + NAD(+) = D-xylulose + NADH + H(+). This chain is Putative D-xylulose reductase, found in Agrobacterium fabrum (strain C58 / ATCC 33970) (Agrobacterium tumefaciens (strain C58)).